The chain runs to 313 residues: tRNA dimethylallyltransferase (313 aa).

12–19 (GPTASGKS) contacts ATP. A substrate-binding site is contributed by 14-19 (TASGKS). 2 interaction with substrate tRNA regions span residues 37–40 (DSMQ) and 161–165 (QRSIR).

This sequence belongs to the IPP transferase family. In terms of assembly, monomer. Mg(2+) serves as cofactor.

The catalysed reaction is adenosine(37) in tRNA + dimethylallyl diphosphate = N(6)-dimethylallyladenosine(37) in tRNA + diphosphate. In terms of biological role, catalyzes the transfer of a dimethylallyl group onto the adenine at position 37 in tRNAs that read codons beginning with uridine, leading to the formation of N6-(dimethylallyl)adenosine (i(6)A). This Pelagibacter ubique (strain HTCC1062) protein is tRNA dimethylallyltransferase.